A 325-amino-acid polypeptide reads, in one-letter code: UDP-N-acetylglucosamine transporter ROCK1 (325 aa).

Residues 1–13 (MATANGAKSPSSM) are Cytoplasmic-facing. A helical transmembrane segment spans residues 14–34 (GPKVLFYSILLTLQYGAQPLI). The Lumenal segment spans residues 35–42 (SKRCIRKD). Residues 43-63 (VIVTSSVLTCEIVKVICALIL) traverse the membrane as a helical segment. Residues 64–109 (MARNGSLKGLAKEWTLMGSLTASGLPAAIYALQNSLLQISYRSLDS) are Cytoplasmic-facing. A helical membrane pass occupies residues 110–130 (LTFSILNQTKIFFTAFFTFII). Over 131 to 135 (LRQKQ) the chain is Lumenal. Residues 136 to 156 (SILQIGALCLLIMAAVLLSVG) form a helical membrane-spanning segment. Over 157 to 171 (EGSNKDSSGINADQK) the chain is Cytoplasmic. The chain crosses the membrane as a helical span at residues 172–192 (LFYGIIPVLAASVLSGLASSL). Over 193–203 (CQWASQVKKHS) the chain is Lumenal. The helical transmembrane segment at 204–224 (SYLMTVEMSIVGSLCLLVSTL) threads the bilayer. Topologically, residues 225 to 241 (KSPDGEAIKKYGFFHGW) are cytoplasmic. A helical transmembrane segment spans residues 242 to 262 (TALTLVPVISNALGGILVGLV). Residues 263 to 270 (TSHAGGVR) lie on the Lumenal side of the membrane. The chain crosses the membrane as a helical span at residues 271–291 (KGFVIVSALLVTALLQFAFEG). At 292 to 325 (KPPSSYCLVALPLVMSSISMYQKYPYIDKKKKKV) the chain is on the cytoplasmic side.

It belongs to the nucleotide-sugar transporter family. CMP-Sialate:CMP antiporter (TC 2.A.7.12) subfamily. In terms of tissue distribution, expressed in roots, cotyledons, leaves, stems, flowers and siliques.

The protein localises to the endoplasmic reticulum membrane. Functionally, mediates the transport of UDP-linked acetylated hexosamines across the endoplasmic reticulum (ER) membrane. Facilitates UDP-N-acetylglucosamine (UDP-GlcNAc) and UDP-N-acetylgalactosamine (UDP-GalNAc) transport. Regulates the cytokinin signal in meristematic cells through modulating activity of cytokinin oxidases/dehydrogenases. Part of the ER quality control system, which determines the fate of aberrant proteins in the secretory pathway. This Arabidopsis thaliana (Mouse-ear cress) protein is UDP-N-acetylglucosamine transporter ROCK1.